The primary structure comprises 637 residues: Chaperone protein HtpG (637 aa).

The segment at 1-345 (MSQQETHGFQ…SNDLPLNVSR (345 aa)) is a; substrate-binding. The interval 346 to 562 (EILQDNHITK…EGEMSSQMIK (217 aa)) is b. A c region spans residues 563–637 (LMQAAGQPVP…MNQMLLANLK (75 aa)).

It belongs to the heat shock protein 90 family. In terms of assembly, homodimer.

It is found in the cytoplasm. In terms of biological role, molecular chaperone. Has ATPase activity. The chain is Chaperone protein HtpG from Shewanella sp. (strain MR-7).